Here is a 193-residue protein sequence, read N- to C-terminus: MELLKQRILQDGKCYPGGILKVDSFINHQMDSKLMYHVAEEFARLFADSGVNKIVTIEASGIAPAIMVGYIMNLPVVFVKKKQPKTMDNMLTTTVHSFTKSRDYTVCISHDFLTDDDRILFIDDFLAYGNAAQGIIDLAEQASAKIVGMGFIIEKAFQNGREALQERGIRVESLAIIRSLDNCCITIADENED.

2 residues coordinate xanthine: L20 and N27. Residue 127 to 131 coordinates 5-phospho-alpha-D-ribose 1-diphosphate; sequence AYGNA. K155 lines the xanthine pocket.

Belongs to the purine/pyrimidine phosphoribosyltransferase family. Xpt subfamily. Homodimer.

The protein resides in the cytoplasm. The enzyme catalyses XMP + diphosphate = xanthine + 5-phospho-alpha-D-ribose 1-diphosphate. It functions in the pathway purine metabolism; XMP biosynthesis via salvage pathway; XMP from xanthine: step 1/1. Converts the preformed base xanthine, a product of nucleic acid breakdown, to xanthosine 5'-monophosphate (XMP), so it can be reused for RNA or DNA synthesis. This chain is Xanthine phosphoribosyltransferase, found in Porphyromonas gingivalis (strain ATCC BAA-308 / W83).